The following is a 76-amino-acid chain: Alpha/kappa-conotoxin-like fe14.1 (76 aa).

Residues 1 to 24 (MPSVRSVTCCCLLWMMLSVQLVTP) form the signal peptide. The propeptide occupies 25–39 (GSPGTAQLSGHRTAR). Intrachain disulfides connect cysteine 46-cysteine 61 and cysteine 50-cysteine 63. Arginine 64 carries the arginine amide modification. Positions 65-76 (GKRDVVSSSMAV) are excised as a propeptide.

Belongs to the conotoxin J superfamily. In terms of tissue distribution, expressed by the venom duct.

It is found in the secreted. Functionally, highly inhibits both nicotinic acetylcholine receptors (neuronal (alpha-3/beta-4) and muscular (alpha-1/beta-1/epsilon/delta) subtypes) and the voltage-gated potassium channel Kv1.6/KCNA6 subtype. The sequence is that of Alpha/kappa-conotoxin-like fe14.1 from Conus ferrugineus (Cone snail).